Consider the following 185-residue polypeptide: Peroxynitrite isomerase (185 aa).

The interval 1-21 is disordered; that stretch reads MHHPARELPFPDALRPGARPA. A GXWXGXG motif is present at residues 34–40; the sequence is GTWRGTG. A heme b-binding site is contributed by His-171.

It belongs to the nitrobindin family. As to quaternary structure, homodimer. It depends on heme b as a cofactor.

The catalysed reaction is peroxynitrite = nitrate. It functions in the pathway nitrogen metabolism. Heme-binding protein able to scavenge peroxynitrite and to protect free L-tyrosine against peroxynitrite-mediated nitration, by acting as a peroxynitrite isomerase that converts peroxynitrite to nitrate. Therefore, this protein likely plays a role in peroxynitrite sensing and in the detoxification of reactive nitrogen and oxygen species (RNS and ROS, respectively). Is able to bind nitric oxide (NO) in vitro, but may act as a sensor of peroxynitrite levels in vivo. The protein is Peroxynitrite isomerase of Streptomyces griseus subsp. griseus (strain JCM 4626 / CBS 651.72 / NBRC 13350 / KCC S-0626 / ISP 5235).